Here is a 465-residue protein sequence, read N- to C-terminus: Glutamate--tRNA ligase (465 aa).

Residues 11 to 21 carry the 'HIGH' region motif; that stretch reads PSPTGFIHLGN. Over residues 120–131 the composition is skewed to basic and acidic residues; the sequence is KPRYDGTWRPEP. Residues 120–139 form a disordered region; the sequence is KPRYDGTWRPEPGKVLPTPP. Positions 243-247 match the 'KMSKS' region motif; sequence KMSKR. Lysine 246 lines the ATP pocket.

The protein belongs to the class-I aminoacyl-tRNA synthetase family. Glutamate--tRNA ligase type 1 subfamily. Monomer.

It is found in the cytoplasm. The catalysed reaction is tRNA(Glu) + L-glutamate + ATP = L-glutamyl-tRNA(Glu) + AMP + diphosphate. Functionally, catalyzes the attachment of glutamate to tRNA(Glu) in a two-step reaction: glutamate is first activated by ATP to form Glu-AMP and then transferred to the acceptor end of tRNA(Glu). This Ralstonia nicotianae (strain ATCC BAA-1114 / GMI1000) (Ralstonia solanacearum) protein is Glutamate--tRNA ligase.